Here is a 515-residue protein sequence, read N- to C-terminus: UBP3-associated protein BRE5 (515 aa).

The NTF2 domain maps to 8 to 140 (ICFAFLQNYY…FDITNDIIRF (133 aa)). Residues 157 to 166 (QSNEENSVSA) are compositionally biased toward low complexity. Disordered stretches follow at residues 157–410 (QSNE…PVFS) and 485–515 (KTVK…KRKD). The span at 168-201 (EEDKIRHESGVEKEKEKEKSPEISKPKAKKETVK) shows a compositional bias: basic and acidic residues. Ser-187 carries the phosphoserine modification. Positions 202–213 (DTTAPTESSTQE) are enriched in polar residues. 2 stretches are compositionally biased toward basic and acidic residues: residues 262–282 (LNEK…KEGS) and 299–319 (EVSD…EIKP). Ser-282 bears the Phosphoserine mark. The segment covering 330–341 (SGNNASTPSSSP) has biased composition (polar residues). Residue Thr-336 is modified to Phosphothreonine. Ser-340 is modified (phosphoserine). A compositionally biased stretch (basic and acidic residues) spans 374–396 (IRPETLPKKPTERKFEMGNRRDN). A Phosphoserine modification is found at Ser-398. The RRM domain maps to 418–494 (YPIYIRGTNG…KTVKKPTSNN (77 aa)). Polar residues predominate over residues 489-503 (KPTSNNPPGIFTNGT). The segment covering 504 to 515 (RSHRKQPLKRKD) has biased composition (basic residues).

As to quaternary structure, heterotetramer with UBP3; contains two molecules of BRE5 and two molecules of UBP3. Forms a complex composed of CDC48, DOA1, deubiquitinase UBP3 and probably BRE5. Within the complex, interacts (via C-terminus) with CDC48; the interaction is direct and UBP3-independent.

Functionally, has a role in de-ubiquitination. In conjunction with UBP3, cleaves ubiquitin, leading to the subsequent mono-ubiquitination of sec23. This Saccharomyces cerevisiae (strain ATCC 204508 / S288c) (Baker's yeast) protein is UBP3-associated protein BRE5 (BRE5).